We begin with the raw amino-acid sequence, 316 residues long: Apolipoprotein E (316 aa).

Positions 1-18 (MKALWAVLVVTLLAGCLA) are cleaved as a signal peptide. Tandem repeats lie at residues 76-97 (VLME…EQMG), 98-119 (PMAE…SRLG), 120-141 (ADME…TMLG), 142-163 (QSTE…KRLM), 164-185 (RDAE…EGAE), 186-207 (RGVG…QRTA), 208-229 (NLGA…ARIR), and 230-251 (GRLE…EQME). Positions 76–251 (VLMEDTMTEL…RLEEVREQME (176 aa)) are 8 X 22 AA approximate tandem repeats. Position 139 is a methionine sulfoxide (Met-139). Position 143 is a phosphoserine (Ser-143). The LDL and other lipoprotein receptors binding stretch occupies residues 154–164 (HLRKLRKRLMR). 158-161 (LRKR) lines the heparin pocket. Residues 206-286 (TANLGAGAAQ…GWFEPLVEDM (81 aa)) form a lipid-binding and lipoprotein association region. 225-232 (GARIRGRL) is a binding site for heparin. A homooligomerization region spans residues 262 to 316 (QQMRLQAEIFQTRLKGWFEPLVEDMQRQWANLMEKIQASVATNPIPPSSVPQESQ). Residues 274–286 (RLKGWFEPLVEDM) form a specificity for association with VLDL region.

It belongs to the apolipoprotein A1/A4/E family. In terms of assembly, homotetramer. May interact with ABCA1; functionally associated with ABCA1 in the biogenesis of HDLs. May interact with APP/A4 amyloid-beta peptide; the interaction is extremely stable in vitro but its physiological significance is unclear. May interact with MAPT. May interact with MAP2. In the cerebrospinal fluid, interacts with secreted SORL1. Interacts with PMEL; this allows the loading of PMEL luminal fragment on ILVs to induce fibril nucleation. Post-translationally, APOE exists as multiple glycosylated and sialylated glycoforms within cells and in plasma. The extent of glycosylation and sialylation are tissue and context specific. In terms of processing, glycated in plasma VLDL. Phosphorylated by FAM20C in the extracellular medium.

The protein localises to the secreted. Its subcellular location is the extracellular space. It localises to the extracellular matrix. It is found in the extracellular vesicle. The protein resides in the endosome. The protein localises to the multivesicular body. APOE is an apolipoprotein, a protein associating with lipid particles, that mainly functions in lipoprotein-mediated lipid transport between organs via the plasma and interstitial fluids. APOE is a core component of plasma lipoproteins and is involved in their production, conversion and clearance. Apolipoproteins are amphipathic molecules that interact both with lipids of the lipoprotein particle core and the aqueous environment of the plasma. As such, APOE associates with chylomicrons, chylomicron remnants, very low density lipoproteins (VLDL) and intermediate density lipoproteins (IDL) but shows a preferential binding to high-density lipoproteins (HDL). It also binds a wide range of cellular receptors including the LDL receptor/LDLR, the LDL receptor-related proteins LRP1, LRP2 and LRP8 and the very low-density lipoprotein receptor/VLDLR that mediate the cellular uptake of the APOE-containing lipoprotein particles. Finally, APOE also has a heparin-binding activity and binds heparan-sulfate proteoglycans on the surface of cells, a property that supports the capture and the receptor-mediated uptake of APOE-containing lipoproteins by cells. A main function of APOE is to mediate lipoprotein clearance through the uptake of chylomicrons, VLDLs, and HDLs by hepatocytes. APOE is also involved in the biosynthesis by the liver of VLDLs as well as their uptake by peripheral tissues ensuring the delivery of triglycerides and energy storage in muscle, heart and adipose tissues. By participating in the lipoprotein-mediated distribution of lipids among tissues, APOE plays a critical role in plasma and tissues lipid homeostasis. APOE is also involved in two steps of reverse cholesterol transport, the HDLs-mediated transport of cholesterol from peripheral tissues to the liver, and thereby plays an important role in cholesterol homeostasis. First, it is functionally associated with ABCA1 in the biogenesis of HDLs in tissues. Second, it is enriched in circulating HDLs and mediates their uptake by hepatocytes. APOE also plays an important role in lipid transport in the central nervous system, regulating neuron survival and sprouting. This is Apolipoprotein E (APOE) from Microtus ochrogaster (Prairie vole).